A 137-amino-acid chain; its full sequence is Fructose-bisphosphate aldolase C (137 aa).

Lys3 functions as the Schiff-base intermediate with dihydroxyacetone-P in the catalytic mechanism.

The protein belongs to the class I fructose-bisphosphate aldolase family. As to quaternary structure, homotetramer.

The catalysed reaction is beta-D-fructose 1,6-bisphosphate = D-glyceraldehyde 3-phosphate + dihydroxyacetone phosphate. It functions in the pathway carbohydrate degradation; glycolysis; D-glyceraldehyde 3-phosphate and glycerone phosphate from D-glucose: step 4/4. This Gallus gallus (Chicken) protein is Fructose-bisphosphate aldolase C (ALDOC).